Here is a 301-residue protein sequence, read N- to C-terminus: Ribonuclease HIII (301 aa).

Positions 84 to 301 (ASAIGSDEVG…TEKAARIAKK (218 aa)) constitute an RNase H type-2 domain. Positions 90, 91, and 195 each coordinate a divalent metal cation.

This sequence belongs to the RNase HII family. RnhC subfamily. Requires Mn(2+) as cofactor. It depends on Mg(2+) as a cofactor.

It is found in the cytoplasm. It catalyses the reaction Endonucleolytic cleavage to 5'-phosphomonoester.. In terms of biological role, endonuclease that specifically degrades the RNA of RNA-DNA hybrids. This Geobacillus sp. (strain WCH70) protein is Ribonuclease HIII.